Consider the following 431-residue polypeptide: C2H2 type master regulator of conidiophore development brlA (431 aa).

3 disordered regions span residues 29 to 51 (MTSS…SHGS), 211 to 275 (TPQQ…SEEY), and 287 to 306 (IRTH…VRSN). Over residues 30–48 (TSSFSPLESPTPTPTSLYS) the composition is skewed to low complexity. Residues 225–265 (PSSNYSDFPASLQTFKPHTPSTPVRSLSLGTPRSDTPQSRM) show a composition bias toward polar residues. A compositionally biased stretch (basic residues) spans 287–302 (IRTHRQPSRKPSKKQL). 2 consecutive C2H2-type zinc fingers follow at residues 321–345 (FKCK…MKSH) and 351–376 (HVCW…TKTH). The interval 390–412 (DETSPDYDPEFRGQLTPDGRPIY) is disordered.

It localises to the nucleus. Functionally, brlA, abaA and wetA are pivotal regulators of conidiophore development and conidium maturation. They act individually and together to regulate their own expression and that of numerous other sporulation-specific genes. Binds promoters of target genes at brlA response elements (BREs) containing the conserved sequence 5'-(C/A)(A/G)AGGG(G/A)-3'. Regulates the expression levels of seven secondary metabolism gene clusters including a down-regulated cluster putatively involved in the biosynthesis of the mycotoxins roquefortine C and meleagrin. Negatively regulates the expression of cellulase genes. This is C2H2 type master regulator of conidiophore development brlA from Penicillium oxalicum (strain 114-2 / CGMCC 5302) (Penicillium decumbens).